A 528-amino-acid chain; its full sequence is Beta-hexosaminidase subunit alpha (528 aa).

The signal sequence occupies residues 1–22; that stretch reads MAGCRLWVSLLLAAALACLATA. Positions 23-88 are excised as a propeptide; that stretch reads LWPWPQYIQT…PRPSFSKKQQ (66 aa). C58 and C104 form a disulfide bridge. N-linked (GlcNAc...) asparagine glycosylation is found at N115, N157, and N295. C277 and C328 are oxidised to a cystine. E323 serves as the catalytic Proton donor. Residues 422-423 form a critical for hydrolysis GM2 gangliosides region; it reads NR. A glycan (N-linked (GlcNAc...) asparagine) is linked at N487. C504 and C521 form a disulfide bridge.

The protein belongs to the glycosyl hydrolase 20 family. There are 3 beta-hexosaminidase isozymes: isozyme A (hexosaminidase A) is a heterodimer composed of one subunit alpha and one subunit beta (chain A and B); isozyme B (hexosaminidase B) is a homodimer of two beta subunits (two chains A and B); isozyme S (hexosaminidase S) is a homodimer of two alpha subunits. The composition of the dimer (isozyme A versus isozyme S) has a significant effect on the substrate specificity of the alpha subunit active site.

It localises to the lysosome. The catalysed reaction is Hydrolysis of terminal non-reducing N-acetyl-D-hexosamine residues in N-acetyl-beta-D-hexosaminides.. It catalyses the reaction N-acetyl-beta-D-galactosaminyl-(1-&gt;4)-beta-D-3-sulfogalactosyl-(1-&gt;4)-beta-D-glucosyl-(1&lt;-&gt;1')-ceramide + H2O = a beta-D-3-sulfogalactosyl-(1-&gt;4)-beta-D-glucosyl-(1&lt;-&gt;1')-ceramide + N-acetyl-beta-D-galactosamine. The enzyme catalyses a ganglioside GM2 (d18:1(4E)) + H2O = a ganglioside GM3 (d18:1(4E)) + N-acetyl-beta-D-galactosamine. It carries out the reaction a ganglioside GM2 + H2O = a ganglioside GM3 + N-acetyl-beta-D-galactosamine. The catalysed reaction is beta-D-GalNAc-(1-&gt;4)-alpha-L-IdoA-(1-&gt;3)-beta-D-GalNAc-4-sulfate-(1-&gt;4)-alpha-L-IdoA-(1-&gt;3)-D-GalNAc-4-sulfate + H2O = alpha-L-IdoA-(1-&gt;3)-beta-D-GalNAc-4-sulfate-(1-&gt;4)-alpha-L-IdoA-(1-&gt;3)-D-GalNAc-4-sulfate + N-acetyl-D-galactosamine. It catalyses the reaction N-acetyl-beta-D-6-sulfogalactosaminyl-(1-&gt;4)-alpha-L-iduronyl-(1-&gt;3)-N-acetyl-D-6-sulfogalactosamine + H2O = alpha-L-iduronyl-(1-&gt;3)-N-acetyl-D-6-sulfogalactosamine + N-acetyl-D-6-sulfogalactosamine. Its activity is regulated as follows. Addition of GM2A stimulates the hydrolysis of sulfated glycosphingolipid SM2 and the ganglioside GM2. Hydrolyzes the non-reducing end N-acetyl-D-hexosamine and/or sulfated N-acetyl-D-hexosamine of glycoconjugates, such as the oligosaccharide moieties from proteins and neutral glycolipids, or from certain mucopolysaccharides. The isozyme S is as active as the isozyme A on the anionic bis-sulfated glycans, the chondroitin-6-sulfate trisaccharide (C6S-3), and the dermatan sulfate pentasaccharide, and the sulfated glycosphingolipid SM2. The isozyme B does not hydrolyze each of these substrates, however hydrolyzes efficiently neutral oligosaccharide. Only the isozyme A is responsible for the degradation of GM2 gangliosides in the presence of GM2A. In Rattus norvegicus (Rat), this protein is Beta-hexosaminidase subunit alpha.